We begin with the raw amino-acid sequence, 387 residues long: Cytochrome b (387 aa).

Helical transmembrane passes span 32-52 (FGFFSLVCLIIQLVSGILLAM), 76-98 (WLLRYVHANGASFFFIVVYVHML), 113-133 (LWVSGVVIFLLLIITGFLGYV), 179-199 (FFSLHYLCPFIIVGLVGLHII), 225-245 (FTIKDLFSFMIFLVLFFAFVF), 290-310 (LGVLALVLAIVVLAFLPFLTI), 325-345 (LFWSFLALCFFLGFLGSQPAA), and 353-373 (LYSTILYFVYILVLFPYIYMV). 2 residues coordinate heme b: His-82 and His-96. Positions 183 and 197 each coordinate heme b.

Belongs to the cytochrome b family. In terms of assembly, the main subunits of complex b-c1 are: cytochrome b, cytochrome c1 and the Rieske protein. Requires heme b as cofactor.

Its subcellular location is the mitochondrion inner membrane. Its function is as follows. Component of the ubiquinol-cytochrome c reductase complex (complex III or cytochrome b-c1 complex) that is part of the mitochondrial respiratory chain. The b-c1 complex mediates electron transfer from ubiquinol to cytochrome c. Contributes to the generation of a proton gradient across the mitochondrial membrane that is then used for ATP synthesis. This chain is Cytochrome b (cytB), found in Dictyostelium citrinum (Slime mold).